A 461-amino-acid polypeptide reads, in one-letter code: tRNA modification GTPase MnmE (461 aa).

(6S)-5-formyl-5,6,7,8-tetrahydrofolate is bound by residues Arg-22, Glu-87, and Arg-126. Residues 223–382 (GLSTVILGRP…LEEAIAALFF (160 aa)) enclose the TrmE-type G domain. K(+) is bound at residue Asn-233. Residues 233–238 (NVGKSS), 252–258 (TDIAGTT), and 277–280 (DTAG) each bind GTP. Ser-237 lines the Mg(2+) pocket. K(+) is bound by residues Thr-252, Ile-254, and Thr-257. A Mg(2+)-binding site is contributed by Thr-258. A (6S)-5-formyl-5,6,7,8-tetrahydrofolate-binding site is contributed by Lys-461.

The protein belongs to the TRAFAC class TrmE-Era-EngA-EngB-Septin-like GTPase superfamily. TrmE GTPase family. In terms of assembly, homodimer. Heterotetramer of two MnmE and two MnmG subunits. K(+) is required as a cofactor.

The protein resides in the cytoplasm. Functionally, exhibits a very high intrinsic GTPase hydrolysis rate. Involved in the addition of a carboxymethylaminomethyl (cmnm) group at the wobble position (U34) of certain tRNAs, forming tRNA-cmnm(5)s(2)U34. The chain is tRNA modification GTPase MnmE from Lysinibacillus sphaericus (strain C3-41).